The sequence spans 97 residues: Putative pterin-4-alpha-carbinolamine dehydratase (97 aa).

Belongs to the pterin-4-alpha-carbinolamine dehydratase family.

It catalyses the reaction (4aS,6R)-4a-hydroxy-L-erythro-5,6,7,8-tetrahydrobiopterin = (6R)-L-erythro-6,7-dihydrobiopterin + H2O. This is Putative pterin-4-alpha-carbinolamine dehydratase from Phenylobacterium zucineum (strain HLK1).